We begin with the raw amino-acid sequence, 330 residues long: D-lactate dehydrogenase (330 aa).

NAD(+) is bound by residues 155–156 (RI), aspartate 175, 206–207 (MP), asparagine 212, 233–235 (MAR), and aspartate 259. The active site involves arginine 235. Residue glutamate 264 is part of the active site. The active-site Proton donor is histidine 296.

This sequence belongs to the D-isomer specific 2-hydroxyacid dehydrogenase family.

The enzyme catalyses (R)-lactate + NAD(+) = pyruvate + NADH + H(+). The chain is D-lactate dehydrogenase (ldhD) from Streptococcus agalactiae serotype III (strain NEM316).